The chain runs to 61 residues: Large ribosomal subunit protein uL30 (61 aa).

Belongs to the universal ribosomal protein uL30 family. In terms of assembly, part of the 50S ribosomal subunit.

The sequence is that of Large ribosomal subunit protein uL30 from Bifidobacterium longum (strain DJO10A).